We begin with the raw amino-acid sequence, 338 residues long: DNA-directed RNA polymerase subunit alpha (338 aa).

Positions 1 to 234 are alpha N-terminal domain (alpha-NTD); the sequence is MIQKNWQELI…DQLEIFVNFE (234 aa). Residues 250 to 338 are alpha C-terminal domain (alpha-CTD); that stretch reads FSPALLKKVD…ELAKRFEEHY (89 aa).

This sequence belongs to the RNA polymerase alpha chain family. Homodimer. The RNAP catalytic core consists of 2 alpha, 1 beta, 1 beta' and 1 omega subunit. When a sigma factor is associated with the core the holoenzyme is formed, which can initiate transcription.

The enzyme catalyses RNA(n) + a ribonucleoside 5'-triphosphate = RNA(n+1) + diphosphate. Functionally, DNA-dependent RNA polymerase catalyzes the transcription of DNA into RNA using the four ribonucleoside triphosphates as substrates. This is DNA-directed RNA polymerase subunit alpha from Xanthobacter autotrophicus (strain ATCC BAA-1158 / Py2).